The primary structure comprises 549 residues: Glucose-6-phosphate isomerase (549 aa).

Glutamate 353 serves as the catalytic Proton donor. Active-site residues include histidine 384 and lysine 513.

Belongs to the GPI family.

The protein resides in the cytoplasm. The enzyme catalyses alpha-D-glucose 6-phosphate = beta-D-fructose 6-phosphate. Its pathway is carbohydrate biosynthesis; gluconeogenesis. It participates in carbohydrate degradation; glycolysis; D-glyceraldehyde 3-phosphate and glycerone phosphate from D-glucose: step 2/4. In terms of biological role, catalyzes the reversible isomerization of glucose-6-phosphate to fructose-6-phosphate. This Brucella melitensis biotype 2 (strain ATCC 23457) protein is Glucose-6-phosphate isomerase.